Consider the following 274-residue polypeptide: MAIHLYKTSTPGTRNGAVDSQVKSNPRNNLIYGQHRCGKGRNARGIITARHRGGGHKRLYRKIDFRRNEKDIYGRIVTIEYDPNRNAYICLIHYGDGEKRYILHPRGAIIGDTIVSGTEVPIKMGNALPLTDMPLGTAIHNIEITLGRGGQLARAAGAVAKLIAKEGKSATLKLPSGEVRLISKNCSATVGQVGNVGVNQKSLGRAGSKCWLGKRPVVRGVVMNPVDHPHGGGEGRAPIGRKKPATPWGYPALGRRSRKRNKYSDNLILRRRSK.

Disordered stretches follow at residues 1–21 (MAIHLYKTSTPGTRNGAVDSQ) and 224–274 (NPVD…RRSK).

The protein belongs to the universal ribosomal protein uL2 family. Part of the 50S ribosomal subunit.

It localises to the plastid. Its subcellular location is the chloroplast. The chain is Large ribosomal subunit protein uL2cz/uL2cy (rpl2-A) from Gossypium hirsutum (Upland cotton).